Consider the following 158-residue polypeptide: 2-C-methyl-D-erythritol 2,4-cyclodiphosphate synthase (158 aa).

Positions 9 and 11 each coordinate a divalent metal cation. 4-CDP-2-C-methyl-D-erythritol 2-phosphate is bound by residues D9–H11 and H35–S36. H43 lines the a divalent metal cation pocket. Residues D57–G59, F62–D66, A101–A107, T133–E136, F140, and R143 each bind 4-CDP-2-C-methyl-D-erythritol 2-phosphate.

The protein belongs to the IspF family. Homotrimer. A divalent metal cation is required as a cofactor.

The enzyme catalyses 4-CDP-2-C-methyl-D-erythritol 2-phosphate = 2-C-methyl-D-erythritol 2,4-cyclic diphosphate + CMP. It functions in the pathway isoprenoid biosynthesis; isopentenyl diphosphate biosynthesis via DXP pathway; isopentenyl diphosphate from 1-deoxy-D-xylulose 5-phosphate: step 4/6. Involved in the biosynthesis of isopentenyl diphosphate (IPP) and dimethylallyl diphosphate (DMAPP), two major building blocks of isoprenoid compounds. Catalyzes the conversion of 4-diphosphocytidyl-2-C-methyl-D-erythritol 2-phosphate (CDP-ME2P) to 2-C-methyl-D-erythritol 2,4-cyclodiphosphate (ME-CPP) with a corresponding release of cytidine 5-monophosphate (CMP). This Bacillus velezensis (strain DSM 23117 / BGSC 10A6 / LMG 26770 / FZB42) (Bacillus amyloliquefaciens subsp. plantarum) protein is 2-C-methyl-D-erythritol 2,4-cyclodiphosphate synthase.